Consider the following 515-residue polypeptide: ATP-dependent RNA helicase DBP3 (515 aa).

Residues 1–67 (MAKRPLQTEA…SDSRYLPTPE (67 aa)) are disordered. The Q motif motif lies at 100-127 (TSFSFLPESSNDLYLPLEKFSSPTPIQA). The region spanning 130 to 306 (WPLAFAGRDL…ASFTKNPVTV (177 aa)) is the Helicase ATP-binding domain. Position 143 to 150 (143 to 150 (AETGSGKT)) interacts with ATP. The DEAD box motif lies at 252-255 (DEAD). The region spanning 335 to 484 (RLLELLRRYQ…DVPESLLKFG (150 aa)) is the Helicase C-terminal domain.

The protein belongs to the DEAD box helicase family. DDX5/DBP2 subfamily.

It localises to the nucleus. The protein localises to the nucleolus. It carries out the reaction ATP + H2O = ADP + phosphate + H(+). ATP-dependent RNA helicase required for 60S ribosomal subunit synthesis. Involved in efficient pre-rRNA processing, predominantly at site A3, which is necessary for the normal formation of 25S and 5.8S rRNAs. In Coccidioides immitis (strain RS) (Valley fever fungus), this protein is ATP-dependent RNA helicase DBP3 (DBP3).